Reading from the N-terminus, the 429-residue chain is Adenylosuccinate synthetase (429 aa).

GTP-binding positions include 12 to 18 and 40 to 42; these read GDEGKGK and GHT. Residue aspartate 13 is the Proton acceptor of the active site. Residues aspartate 13 and glycine 40 each coordinate Mg(2+). IMP contacts are provided by residues 13–16, 38–41, threonine 130, arginine 144, glutamine 225, threonine 240, and arginine 304; these read DEGK and NAGH. Histidine 41 functions as the Proton donor in the catalytic mechanism. Position 300-306 (300-306) interacts with substrate; it reads ATTGRPR. Residues arginine 306, 332–334, and 414–416 each bind GTP; these read KLD and SVG.

The protein belongs to the adenylosuccinate synthetase family. In terms of assembly, homodimer. Requires Mg(2+) as cofactor.

It is found in the cytoplasm. The catalysed reaction is IMP + L-aspartate + GTP = N(6)-(1,2-dicarboxyethyl)-AMP + GDP + phosphate + 2 H(+). It functions in the pathway purine metabolism; AMP biosynthesis via de novo pathway; AMP from IMP: step 1/2. Functionally, plays an important role in the de novo pathway of purine nucleotide biosynthesis. Catalyzes the first committed step in the biosynthesis of AMP from IMP. This Syntrophobacter fumaroxidans (strain DSM 10017 / MPOB) protein is Adenylosuccinate synthetase.